Here is a 360-residue protein sequence, read N- to C-terminus: Mannose-1-phosphate guanylyltransferase catalytic subunit beta (360 aa).

The segment at 2–222 (KALILVGGYG…QGFWMDIGQP (221 aa)) is substrate-binding domain. Aspartate 110 provides a ligand contact to GDP-alpha-D-mannose. A Mg(2+)-binding site is contributed by aspartate 110. Lysine 162 is a catalytic residue. Position 218 (aspartate 218) interacts with GDP-alpha-D-mannose. Aspartate 218 contributes to the Mg(2+) binding site. The segment at 245–360 (HVGPGFIGNV…ESVPEPRIIM (116 aa)) is hexapeptide repeat domain.

Belongs to the transferase hexapeptide repeat family. As to quaternary structure, component of the GMPPA-GMPPB mannose-1-phosphate guanylyltransferase complex composed of 4 gmppa subunits and 8 gmppb subunits; the complex is organized into three layers, a central layer made up of 2 gmppa dimers sandwiched between two layers each made up of 2 gmppb dimers. Catalytic activity of gmppb is reduced when part of the complex and binding of GDP-alpha-D-Mannose by gmppa induces allosteric feedback inhibition of gmppb. Mg(2+) is required as a cofactor.

The catalysed reaction is alpha-D-mannose 1-phosphate + GTP + H(+) = GDP-alpha-D-mannose + diphosphate. Its pathway is nucleotide-sugar biosynthesis; GDP-alpha-D-mannose biosynthesis; GDP-alpha-D-mannose from alpha-D-mannose 1-phosphate (GTP route): step 1/1. Enzyme activity is reduced by incorporation into the GMPPA-GMPPB mannose-1-phosphate guanylyltransferase complex. Allosterically inhibited, when part of the GMPPA-GMPPB complex, by GDP-alpha-D-mannose binding to GMPPA. In terms of biological role, catalytic subunit of the GMPPA-GMPPB mannose-1-phosphate guanylyltransferase complex. Catalyzes the formation of GDP-mannose, an essential precursor of glycan moieties of glycoproteins and glycolipids. Can catalyze the reverse reaction in vitro. Together with GMPPA regulates GDP-alpha-D-mannose levels. The protein is Mannose-1-phosphate guanylyltransferase catalytic subunit beta (gmppb) of Xenopus tropicalis (Western clawed frog).